We begin with the raw amino-acid sequence, 389 residues long: Chromobox protein homolog 8 (389 aa).

Residues 11-69 (FAAEALLKRRIRKGRMEYLVKWKGWSQKYSTWEPEENILDARLLAAFEEREREMELYGP) form the Chromo domain. Phosphoserine occurs at positions 110 and 130. Residues 124–241 (LRNMGLSPPA…DDTPSGAGKF (118 aa)) form a disordered region. The segment covering 145–189 (EAPRDRDRDRDRDRERDRERERERERERERERERERGTSRVDDKP) has biased composition (basic and acidic residues). Ser191, Ser256, Ser265, Ser311, Ser332, and Ser352 each carry phosphoserine. Residues 298–327 (GALDPNGTRVRHGSGPPSSGGGLYRDMGAQ) are disordered.

Component of a PRC1-like complex. Interacts with RING1 RNF2, PCGF1, PCGF2, PCGF3, BMI1, PCGF5 and PCGF6. Interacts with MLLT3 and histone H3. Interacts with PHC2.

The protein resides in the nucleus. Its function is as follows. Component of a Polycomb group (PcG) multiprotein PRC1-like complex, a complex class required to maintain the transcriptionally repressive state of many genes, including Hox genes, throughout development. PcG PRC1 complex acts via chromatin remodeling and modification of histones; it mediates monoubiquitination of histone H2A 'Lys-119', rendering chromatin heritably changed in its expressibility. The chain is Chromobox protein homolog 8 (CBX8) from Homo sapiens (Human).